Reading from the N-terminus, the 86-residue chain is Large ribosomal subunit protein bL27 (86 aa).

A disordered region spans residues 1-26; that stretch reads MATKKAGGSSRNGRDSAGRRLGIKKS.

Belongs to the bacterial ribosomal protein bL27 family.

The protein is Large ribosomal subunit protein bL27 of Rickettsia typhi (strain ATCC VR-144 / Wilmington).